A 442-amino-acid chain; its full sequence is Protein bangles and beads (442 aa).

Residues 47–442 (AVEPAPLKPE…SEESSESKEN (396 aa)) are disordered. Composition is skewed to basic and acidic residues over residues 55–67 (PEAE…KTIE), 114–125 (PEKKTLPEEAKP), and 133–146 (EAEK…RTEA). Residues 159–172 (AIEQAPEAPAANAE) show a composition bias toward low complexity. 2 stretches are compositionally biased toward basic and acidic residues: residues 177 to 194 (VVDE…KSAE) and 204 to 240 (AEKE…EPAK). Low complexity-rich tracts occupy residues 241–255 (AAEA…AATK) and 272–288 (SSPA…AAQA). Basic and acidic residues predominate over residues 329-339 (EAVKEQEKEQP). Low complexity predominate over residues 357-376 (TAAPAGAPEPTAAVAPAAVP). Basic and acidic residues predominate over residues 408–442 (EPKKSSEEKSDKSESKVDESSESKESEESSESKEN). Phosphoserine is present on residues Ser430, Ser433, Ser436, and Ser437.

In terms of tissue distribution, expressed in the embryonic CNS, in sets of cells that are segmentally reiterated along the periphery of the nervous system.

In terms of biological role, may play an important role during development. This is Protein bangles and beads (bnb) from Drosophila melanogaster (Fruit fly).